We begin with the raw amino-acid sequence, 253 residues long: Sulfate transporter CysZ (253 aa).

4 helical membrane passes run 31–51 (FVIL…WWLF), 75–95 (LLWP…FSTI), 151–171 (IVLL…PVLW), and 222–242 (IPLL…AMWV).

This sequence belongs to the CysZ family.

The protein resides in the cell inner membrane. In terms of biological role, high affinity, high specificity proton-dependent sulfate transporter, which mediates sulfate uptake. Provides the sulfur source for the cysteine synthesis pathway. This is Sulfate transporter CysZ from Shigella flexneri serotype 5b (strain 8401).